The primary structure comprises 274 residues: uncharacterized protein (274 aa).

Over residues 1-17 (MTQLTNFSESFSNQNSN) the composition is skewed to low complexity. Disordered regions lie at residues 1 to 38 (MTQL…YYVR) and 222 to 274 (ELGT…MEFE). Residues 18–28 (LHQPYNFNSHQ) are compositionally biased toward polar residues. A compositionally biased stretch (basic and acidic residues) spans 29-38 (PPEENHYYVR). 2 stretches are compositionally biased toward polar residues: residues 239 to 249 (PMASPTGSSQI) and 256 to 265 (SPNSLTNGSV).

This is an uncharacterized protein from Caenorhabditis elegans.